Here is a 314-residue protein sequence, read N- to C-terminus: Glycerol-3-phosphate dehydrogenase [NAD(P)+] (314 aa).

NADPH contacts are provided by Ser-14, Phe-15, Arg-35, and Lys-108. Sn-glycerol 3-phosphate-binding residues include Lys-108 and Gly-136. Residue Ala-140 participates in NADPH binding. Sn-glycerol 3-phosphate-binding residues include Lys-191, Asp-247, Ser-257, Arg-258, and Asn-259. Catalysis depends on Lys-191, which acts as the Proton acceptor. Arg-258 serves as a coordination point for NADPH. NADPH is bound by residues Leu-282 and Glu-284.

The protein belongs to the NAD-dependent glycerol-3-phosphate dehydrogenase family.

The protein localises to the cytoplasm. It catalyses the reaction sn-glycerol 3-phosphate + NAD(+) = dihydroxyacetone phosphate + NADH + H(+). The catalysed reaction is sn-glycerol 3-phosphate + NADP(+) = dihydroxyacetone phosphate + NADPH + H(+). It functions in the pathway membrane lipid metabolism; glycerophospholipid metabolism. Catalyzes the reduction of the glycolytic intermediate dihydroxyacetone phosphate (DHAP) to sn-glycerol 3-phosphate (G3P), the key precursor for phospholipid synthesis. In Rickettsia bellii (strain OSU 85-389), this protein is Glycerol-3-phosphate dehydrogenase [NAD(P)+].